A 276-amino-acid polypeptide reads, in one-letter code: Putative pyruvate, phosphate dikinase regulatory protein 1 (276 aa).

Residue 150–157 (GLPRTSKT) participates in ADP binding.

Belongs to the pyruvate, phosphate/water dikinase regulatory protein family. PDRP subfamily.

It catalyses the reaction N(tele)-phospho-L-histidyl/L-threonyl-[pyruvate, phosphate dikinase] + ADP = N(tele)-phospho-L-histidyl/O-phospho-L-threonyl-[pyruvate, phosphate dikinase] + AMP + H(+). It carries out the reaction N(tele)-phospho-L-histidyl/O-phospho-L-threonyl-[pyruvate, phosphate dikinase] + phosphate + H(+) = N(tele)-phospho-L-histidyl/L-threonyl-[pyruvate, phosphate dikinase] + diphosphate. Bifunctional serine/threonine kinase and phosphorylase involved in the regulation of the pyruvate, phosphate dikinase (PPDK) by catalyzing its phosphorylation/dephosphorylation. The sequence is that of Putative pyruvate, phosphate dikinase regulatory protein 1 from Syntrophomonas wolfei subsp. wolfei (strain DSM 2245B / Goettingen).